The chain runs to 423 residues: Gamma-glutamyl phosphate reductase (423 aa).

It belongs to the gamma-glutamyl phosphate reductase family.

The protein localises to the cytoplasm. It carries out the reaction L-glutamate 5-semialdehyde + phosphate + NADP(+) = L-glutamyl 5-phosphate + NADPH + H(+). Its pathway is amino-acid biosynthesis; L-proline biosynthesis; L-glutamate 5-semialdehyde from L-glutamate: step 2/2. Catalyzes the NADPH-dependent reduction of L-glutamate 5-phosphate into L-glutamate 5-semialdehyde and phosphate. The product spontaneously undergoes cyclization to form 1-pyrroline-5-carboxylate. The chain is Gamma-glutamyl phosphate reductase from Burkholderia orbicola (strain MC0-3).